The following is a 560-amino-acid chain: Protein AATF (560 aa).

A2 is subject to N-acetylalanine. A phosphoserine mark is found at S61 and S63. The disordered stretch occupies residues 76-208 (TSRKAWNEDH…GDRNSEDDGV (133 aa)). A compositionally biased stretch (acidic residues) spans 94 to 129 (SDEEISDEEGSGDEDSEGLGLEEYDEDDLGAAEEQE). A phosphoserine mark is found at S150 and S155. Positions 156–165 (DFEKFTKGMD) are enriched in basic and acidic residues. Residues 168–195 (GSSEEEEDEESGMEEGDDAEDSQGESEE) are compositionally biased toward acidic residues. Residues S203, S273, S316, S320, and S321 each carry the phosphoserine modification. The interval 273 to 315 (SALKNSHKALKALLRSLVGLQEELLFQYPDTRYLVDGTKPNAG) is POLR2J binding. The disordered stretch occupies residues 309–333 (GTKPNAGSEEISSEDDELVEEKKQQ). The RB1 binding stretch occupies residues 316-372 (SEEISSEDDELVEEKKQQRRRVPAKRKLEMEDYPSFMAKRFADFTVYRNRTLQKWHD). The tract at residues 373–472 (KTKLASGKLG…FYHQLLRELI (100 aa)) is RB1 and SP1 binding.

The protein belongs to the AATF family. Part of the small subunit (SSU) processome, composed of more than 70 proteins and the RNA chaperone small nucleolar RNA (snoRNA) U3. Interacts with POLR2J, RB1/RB, RBL1/P107 and RBL2/P130. Interacts with PAWR and SP1. May also bind MAPT. Hyperphosphorylated during the G1/S phase transition. As to expression, ubiquitously expressed. Expressed at high levels in brain, heart, kidney, placenta and thymus.

Its subcellular location is the nucleus. The protein resides in the nucleolus. Functionally, part of the small subunit (SSU) processome, first precursor of the small eukaryotic ribosomal subunit. During the assembly of the SSU processome in the nucleolus, many ribosome biogenesis factors, an RNA chaperone and ribosomal proteins associate with the nascent pre-rRNA and work in concert to generate RNA folding, modifications, rearrangements and cleavage as well as targeted degradation of pre-ribosomal RNA by the RNA exosome. May function as a general inhibitor of the histone deacetylase HDAC1. Binding to the pocket region of RB1 may displace HDAC1 from RB1/E2F complexes, leading to activation of E2F target genes and cell cycle progression. Conversely, displacement of HDAC1 from SP1 bound to the CDKN1A promoter leads to increased expression of this CDK inhibitor and blocks cell cycle progression. Also antagonizes PAWR mediated induction of aberrant amyloid peptide production in Alzheimer disease (presenile and senile dementia), although the molecular basis for this phenomenon has not been described to date. The polypeptide is Protein AATF (Homo sapiens (Human)).